We begin with the raw amino-acid sequence, 266 residues long: Apolipoprotein A-I (266 aa).

An N-terminal signal peptide occupies residues Met1–Ala18. 2 repeat units span residues Leu67–Gly88 and Pro89–Ser110. Positions Leu67–Gln266 are 10 X approximate tandem repeats. Met109 is subject to Methionine sulfoxide. One copy of the 3; half-length repeat lies at Lys111–Gln121. Repeat copies occupy residues Pro122–Ala143, Pro144–Thr165, Pro166–Ala187, Pro188–Ser209, and Ala210–Lys231. The stretch at Pro232–Leu242 is one 9; half-length repeat. Repeat unit 10 spans residues Pro243–Gln266.

The protein belongs to the apolipoprotein A1/A4/E family. As to quaternary structure, homodimer. Interacts with APOA1BP and CLU. Component of a sperm activating protein complex (SPAP), consisting of APOA1, an immunoglobulin heavy chain, an immunoglobulin light chain and albumin. Interacts with NDRG1. Interacts with SCGB3A2. Interacts with NAXE and YJEFN3. Post-translationally, glycosylated. Palmitoylated. In terms of processing, phosphorylation sites are present in the extracellular medium.

It is found in the secreted. Functionally, participates in the reverse transport of cholesterol from tissues to the liver for excretion by promoting cholesterol efflux from tissues and by acting as a cofactor for the lecithin cholesterol acyltransferase (LCAT). As part of the SPAP complex, activates spermatozoa motility. The chain is Apolipoprotein A-I (APOA1) from Mustela putorius furo (European domestic ferret).